Consider the following 1027-residue polypeptide: uncharacterized protein (1027 aa).

This is an uncharacterized protein from Colorado tick fever virus (strain USA/Florio N-7180) (CTFV).